A 222-amino-acid polypeptide reads, in one-letter code: Thymidylate kinase (222 aa).

Position 7–14 (7–14) interacts with ATP; sequence GIDGAGKS.

The protein belongs to the thymidylate kinase family.

The enzyme catalyses dTMP + ATP = dTDP + ADP. Functionally, phosphorylation of dTMP to form dTDP in both de novo and salvage pathways of dTTP synthesis. The sequence is that of Thymidylate kinase from Chlorobium chlorochromatii (strain CaD3).